The chain runs to 463 residues: MDYLPLFHKLQGGRVLVVGGGEIALRKARLLADAGGVLRVVAPDVDGQLAALAREGGGEVLVRGYQAADLVGCRLVIAATDDPGLNAQVSADAQALSVPVNVVDAPALCTVIFPAIVDRSPLVIAVSSGGDAPVLARLIRAKLEAWIPSAYGELAGLAARFRHKVKSLYPDVNQRRGFWETVFQGPIAERQLAGQGAEAERLLQAMVDGAPVQQGGEVYLVGAGPGDPDLLTFRALRLMQQADVVLYDRLVAPAIIDMCRRDAERIYVGKRRADHSVPQDQINRLLVDLARQGKRVLRLKGGDPFIFGRGGEEIEELAEHGIPFQVVPGITAASGCSAYGGIPLTHRDYAQSVRFVTGHLKDGTSNLPWTDLVAPAQTLVFYMGLVGLPTICAELIRHGRAASTPAALVQQGTTRNQRVFTGTLADLPDLVAQHEVHAPTLVIVGEVVQLRDKLAWFEGSQNS.

The segment at 1-203 (MDYLPLFHKL…GQGAEAERLL (203 aa)) is precorrin-2 dehydrogenase /sirohydrochlorin ferrochelatase. Residues 22–23 (EI) and 43–44 (PD) each bind NAD(+). A Phosphoserine modification is found at Ser128. Residues 216 to 463 (GEVYLVGAGP…LAWFEGSQNS (248 aa)) are uroporphyrinogen-III C-methyltransferase. Residue Pro225 coordinates S-adenosyl-L-methionine. Asp248 (proton acceptor) is an active-site residue. Residue Lys270 is the Proton donor of the active site. S-adenosyl-L-methionine contacts are provided by residues 301 to 303 (GGD), Ile306, 331 to 332 (TA), Met383, and Gly412.

In the N-terminal section; belongs to the precorrin-2 dehydrogenase / sirohydrochlorin ferrochelatase family. This sequence in the C-terminal section; belongs to the precorrin methyltransferase family.

The enzyme catalyses uroporphyrinogen III + 2 S-adenosyl-L-methionine = precorrin-2 + 2 S-adenosyl-L-homocysteine + H(+). It catalyses the reaction precorrin-2 + NAD(+) = sirohydrochlorin + NADH + 2 H(+). The catalysed reaction is siroheme + 2 H(+) = sirohydrochlorin + Fe(2+). It functions in the pathway cofactor biosynthesis; adenosylcobalamin biosynthesis; precorrin-2 from uroporphyrinogen III: step 1/1. It participates in cofactor biosynthesis; adenosylcobalamin biosynthesis; sirohydrochlorin from precorrin-2: step 1/1. The protein operates within porphyrin-containing compound metabolism; siroheme biosynthesis; precorrin-2 from uroporphyrinogen III: step 1/1. Its pathway is porphyrin-containing compound metabolism; siroheme biosynthesis; siroheme from sirohydrochlorin: step 1/1. It functions in the pathway porphyrin-containing compound metabolism; siroheme biosynthesis; sirohydrochlorin from precorrin-2: step 1/1. In terms of biological role, multifunctional enzyme that catalyzes the SAM-dependent methylations of uroporphyrinogen III at position C-2 and C-7 to form precorrin-2 via precorrin-1. Then it catalyzes the NAD-dependent ring dehydrogenation of precorrin-2 to yield sirohydrochlorin. Finally, it catalyzes the ferrochelation of sirohydrochlorin to yield siroheme. The chain is Siroheme synthase from Pseudomonas putida (strain ATCC 700007 / DSM 6899 / JCM 31910 / BCRC 17059 / LMG 24140 / F1).